The sequence spans 748 residues: Acetyl-CoA decarbonylase/synthase complex subunit beta 1 (748 aa).

Residues Cys-480, Cys-483, Cys-569, and Cys-571 each coordinate [Ni-Fe-S] cluster.

The protein belongs to the CdhC family. Monomer. The ACDS complex is made up of alpha, epsilon, beta, gamma and delta chains with a probable stoichiometry of (alpha(2)epsilon(2))(4)-beta(8)-(gamma(1)delta(1))(8) (Potential). [Ni-Fe-S] cluster serves as cofactor.

The catalysed reaction is Co(I)-[corrinoid Fe-S protein] + acetyl-CoA + H(+) = methyl-Co(III)-[corrinoid Fe-S protein] + CO + CoA. Part of a complex that catalyzes the reversible cleavage of acetyl-CoA, allowing autotrophic growth from CO(2). The alpha-epsilon complex generates CO from CO(2), while the beta subunit (this protein) combines the CO with CoA and a methyl group to form acetyl-CoA. The methyl group, which is incorporated into acetyl-CoA, is transferred to the beta subunit by a corrinoid iron-sulfur protein (the gamma-delta complex). The protein is Acetyl-CoA decarbonylase/synthase complex subunit beta 1 (cdhC1) of Methanocaldococcus jannaschii (strain ATCC 43067 / DSM 2661 / JAL-1 / JCM 10045 / NBRC 100440) (Methanococcus jannaschii).